Reading from the N-terminus, the 480-residue chain is Cysteine--tRNA ligase (480 aa).

Cys-29 provides a ligand contact to Zn(2+). The 'HIGH' region signature appears at 31–41 (VTVYDHCHIGH). Cys-209, His-234, and Glu-238 together coordinate Zn(2+). The 'KMSKS' region motif lies at 266–270 (KMSKS). Residue Lys-269 coordinates ATP.

It belongs to the class-I aminoacyl-tRNA synthetase family. As to quaternary structure, monomer. Zn(2+) is required as a cofactor.

The protein resides in the cytoplasm. The enzyme catalyses tRNA(Cys) + L-cysteine + ATP = L-cysteinyl-tRNA(Cys) + AMP + diphosphate. The chain is Cysteine--tRNA ligase from Geobacter sp. (strain M21).